The chain runs to 174 residues: Large ribosomal subunit protein uL10 (174 aa).

This sequence belongs to the universal ribosomal protein uL10 family. In terms of assembly, part of the ribosomal stalk of the 50S ribosomal subunit. The N-terminus interacts with L11 and the large rRNA to form the base of the stalk. The C-terminus forms an elongated spine to which L12 dimers bind in a sequential fashion forming a multimeric L10(L12)X complex.

Functionally, forms part of the ribosomal stalk, playing a central role in the interaction of the ribosome with GTP-bound translation factors. The protein is Large ribosomal subunit protein uL10 of Anaeromyxobacter sp. (strain K).